The primary structure comprises 713 residues: Segment polarity protein dishevelled homolog DVL-3 (713 aa).

Residues 1 to 82 (MGETKVIYHL…RVVCWLVSAD (82 aa)) form the DIX domain. 2 stretches are compositionally biased toward polar residues: residues 87-98 (DAGSVCADNQSD) and 118-127 (HPNTRGSQEN). Positions 87–235 (DAGSVCADNQ…PRIERSSSFS (149 aa)) are disordered. Basic and acidic residues predominate over residues 140–155 (AHRERPRRKETPEHAT). Low complexity predominate over residues 173–189 (ESSSTLMSSELDSTSFF). The segment covering 199–210 (RFSNSTEQSSAS) has biased composition (polar residues). Basic residues predominate over residues 212–225 (LMRRHKRRRRKPKA). The PDZ domain maps to 248–333 (TVTLNMEKYN…KPGPITLTVA (86 aa)). The DEP domain occupies 421–495 (PESGLEVRDR…SEQCYYIFGD (75 aa)). Residues 508-518 (HDGSSGTSDQD) are compositionally biased toward polar residues. Disordered stretches follow at residues 508–527 (HDGS…PHPG) and 545–652 (YSPH…GPPG). Over residues 564 to 579 (GSQHSEGSRSSGSNRS) the composition is skewed to low complexity. Basic and acidic residues-rich tracts occupy residues 580–593 (STEK…KGGD) and 602–618 (ESDH…RAAS). Residues 629–646 (HRSHHSIAHSIRSHHTHH) are compositionally biased toward basic residues.

It belongs to the DSH family.

It localises to the cytoplasm. Involved in the signal transduction pathway mediated by multiple Wnt genes. Required during ciliogenesis for the docking of basal bodies to the apical plasma membrane. This is Segment polarity protein dishevelled homolog DVL-3 from Xenopus tropicalis (Western clawed frog).